A 325-amino-acid polypeptide reads, in one-letter code: Malate dehydrogenase (325 aa).

Gly-7 to Gly-13 lines the NADP(+) pocket. The substrate site is built by Arg-84 and Arg-90. NADP(+) contacts are provided by residues Asn-97 and Val-120–Asn-122. 2 residues coordinate substrate: Asn-122 and Arg-153. His-177 functions as the Proton acceptor in the catalytic mechanism.

It belongs to the LDH/MDH superfamily.

It carries out the reaction (S)-malate + NADP(+) = oxaloacetate + NADPH + H(+). The enzyme catalyses (S)-malate + NAD(+) = oxaloacetate + NADH + H(+). Its function is as follows. Catalyzes the reversible oxidation of malate to oxaloacetate. Can use NAD(+) and NADP(+) with similar specific activity. This chain is Malate dehydrogenase, found in Methanothermobacter marburgensis (strain ATCC BAA-927 / DSM 2133 / JCM 14651 / NBRC 100331 / OCM 82 / Marburg) (Methanobacterium thermoautotrophicum).